Here is a 457-residue protein sequence, read N- to C-terminus: Solute carrier family 38 member 6 (457 aa).

Methionine 1 carries the post-translational modification N-acetylmethionine. Residues serine 4 and serine 7 each carry the phosphoserine modification. A run of 5 helical transmembrane segments spans residues 48-68, 70-90, 112-132, 171-191, and 192-212; these read FGLS…LGLA, VMAN…ALLA, LGLF…IIIQ, LLII…KIGF, and LGYT…VVVI. Residues cysteine 219 and cysteine 239 are joined by a disulfide bond. Helical transmembrane passes span 251–271, 289–309, 328–348, 372–392, 395–415, and 432–452; these read VYAI…LPIY, AIAL…LTFY, VIVM…APLI, SLTT…VPDI, VFGV…PGLF, and ALFL…LIIF.

Belongs to the amino acid/polyamine transporter 2 family. Expressed exclusively in neurons and not in astrocytes and glia cells. Highly expressed in the synapse. Highly expressed in glutamatergic neurons. Primarily expressed in excitatory neurons, with some minor expression in inhibitory neurons.

It is found in the cell membrane. Its subcellular location is the synapse. The enzyme catalyses L-glutamine(out) = L-glutamine(in). It catalyses the reaction L-glutamate(out) = L-glutamate(in). In terms of biological role, amino acid transporter with an apparent selectivity for L-glutamine and L-glutamate. May facilitate glutamine uptake in excitatory neurons. The transport mechanism remains to be elucidated. The protein is Solute carrier family 38 member 6 of Mus musculus (Mouse).